The primary structure comprises 238 residues: tRNA (guanine-N(1)-)-methyltransferase (238 aa).

S-adenosyl-L-methionine-binding positions include glycine 109 and 129–134 (IGDFVL).

It belongs to the RNA methyltransferase TrmD family. In terms of assembly, homodimer.

It is found in the cytoplasm. The enzyme catalyses guanosine(37) in tRNA + S-adenosyl-L-methionine = N(1)-methylguanosine(37) in tRNA + S-adenosyl-L-homocysteine + H(+). In terms of biological role, specifically methylates guanosine-37 in various tRNAs. The chain is tRNA (guanine-N(1)-)-methyltransferase from Exiguobacterium sp. (strain ATCC BAA-1283 / AT1b).